The sequence spans 257 residues: MRILLTNDDGIHAEGLAALERIARTMSDDVWIVAPETDQSGLAHSLSLSEPLRLRKVSDKHYALRGTPTDCVIMGIRQVMDIKPDLILSGVNSGSNVADDVTYSGTIAGAIEGTLQGVRSFALSQAYVHENGTRVVPWEVVQAHAPALLGKLIDIDLPDGTFLNLNFPNCRPDEVSGTEVTAQGNLAFNLQVDERADGRGFPYYWLRFGERSGIFRPGTDIHALKQNRISVTPLKLDLTDYSVQDRVARALGHGVAD.

A divalent metal cation contacts are provided by D8, D9, S40, and N92.

It belongs to the SurE nucleotidase family. The cofactor is a divalent metal cation.

Its subcellular location is the cytoplasm. It catalyses the reaction a ribonucleoside 5'-phosphate + H2O = a ribonucleoside + phosphate. Its function is as follows. Nucleotidase that shows phosphatase activity on nucleoside 5'-monophosphates. In Rhizobium rhizogenes (strain K84 / ATCC BAA-868) (Agrobacterium radiobacter), this protein is 5'-nucleotidase SurE.